The primary structure comprises 796 residues: MTSTLQATDIATLSPNEQAAIDAWWRAANYLSVGQIYLRDNPLLQEPLRPEHIKQRLLGHWGSDPGLSFVYVHLNRLIRRLDLNLIYVTGPGHGAPALLANAWLEGTYSEVYPNCQQSTAGLQQFFKQFSFPGGIGSHCTPETPGSIHEGGELGYSLSHAFGAALDNPDLIVACVIGDGEAETGPLATSWHSNKFLNPAQDGAVLPILHLNGYKIANPTLLSRISHEELRSLFIGYGYEPFFVEGNDPAILHGVMASTLATCVQKIQAIQAAARSGESSDRPMWPMIVLRTPKGWTGPATIKGHVVEGSWRSHQVPMADVLTNPEHLQLLEDWLRSYRPEELFDASGAPVAELQAIAPIGDRRMSANPVTNGGLLRRALTLPDFRDQAVSVPAPGKSRADSTRPLGQFLREVIRHNPDNFRLFGPDETASNRLDAVYEVTSKVWLGDRIPEDEDGGHLSDRGRVMEILSEHTLEGWLEAYLLTGRHGFFATYEAFAHVIDSMVNQHAKWLDVSKREVDWRAPVSSLNILLSSTVWRQDHNGFSHQDPGFIDLVTNKSARVTRIYLPPDANCLLSVADHCLRSTDYINVIVADKQSHLQYLDAEAAARHCAKGIGIWDWASNDQGASPDVVIASCGDVVTLEALAATALLREHFPDLKIRFVNVVDLFRLQPDTEHPHGLSDRDFDSLFTVDKPIIFNFHGYPWLIHKLAYRRHNHNNLHVRGYKEVGNINTPLELAIRNQVDRFNLAIDVIDRVPHLRDRGAHVKEWLKDQIHDHIQYAYQEGIDRPEINQWQWPF.

Belongs to the XFP family. Requires thiamine diphosphate as cofactor.

The chain is Probable phosphoketolase from Synechococcus elongatus (strain ATCC 33912 / PCC 7942 / FACHB-805) (Anacystis nidulans R2).